The chain runs to 232 residues: Large ribosomal subunit protein uL1 (232 aa).

The protein belongs to the universal ribosomal protein uL1 family. As to quaternary structure, part of the 50S ribosomal subunit.

Binds directly to 23S rRNA. The L1 stalk is quite mobile in the ribosome, and is involved in E site tRNA release. Its function is as follows. Protein L1 is also a translational repressor protein, it controls the translation of the L11 operon by binding to its mRNA. The chain is Large ribosomal subunit protein uL1 from Bacillus velezensis (strain DSM 23117 / BGSC 10A6 / LMG 26770 / FZB42) (Bacillus amyloliquefaciens subsp. plantarum).